The sequence spans 165 residues: uncharacterized protein (165 aa).

Residues 10–27 (VSLTIVFVLFFSADVSLT) traverse the membrane as a helical segment.

It is found in the membrane. This is an uncharacterized protein from Saccharomyces cerevisiae (strain ATCC 204508 / S288c) (Baker's yeast).